The primary structure comprises 77 residues: Large ribosomal subunit protein uL24c (77 aa).

Belongs to the universal ribosomal protein uL24 family. In terms of assembly, part of the 50S ribosomal subunit.

It is found in the plastid. It localises to the chloroplast. One of two assembly initiator proteins, it binds directly to the 5'-end of the 23S rRNA, where it nucleates assembly of the 50S subunit. The protein is Large ribosomal subunit protein uL24c (rpl24) of Thalassiosira pseudonana (Marine diatom).